A 145-amino-acid polypeptide reads, in one-letter code: Transcriptional regulator MraZ (145 aa).

SpoVT-AbrB domains are found at residues 7–54 (NATN…GPDL) and 83–126 (GVFM…QPQA).

The protein belongs to the MraZ family. Forms oligomers.

The protein resides in the cytoplasm. The protein localises to the nucleoid. This is Transcriptional regulator MraZ from Rhizobium leguminosarum bv. trifolii (strain WSM2304).